Consider the following 275-residue polypeptide: Phospholipid scramblase (275 aa).

The helical transmembrane segment at 256 to 272 (WKMMLLAFALFLDYMYY) threads the bilayer.

Belongs to the phospholipid scramblase family. As to quaternary structure, forms homooligomers in the presence of calcium. Ca(2+) serves as cofactor. It depends on Mg(2+) as a cofactor.

The protein localises to the membrane. Its subcellular location is the cell membrane. The catalysed reaction is a 1,2-diacyl-sn-glycero-3-phosphoethanolamine(in) = a 1,2-diacyl-sn-glycero-3-phosphoethanolamine(out). Functionally, catalyzes calcium-induced ATP-independent rapid bidirectional and non-specific movement of phospholipids (lipid scrambling or lipid flip-flop) between the inner and outer leaflet of the plasma membrane resulting in collapse of the phospholipid asymmetry. Preferentially, mediates calcium-dependent phosphatidylethanolamine externalization. During the liver stage, plays a role in the interaction with, and thus invasion of, host hepatocytes. Dispensable for host erythrocyte invasion and asexual parasite development. In Plasmodium falciparum (isolate 3D7), this protein is Phospholipid scramblase.